A 268-amino-acid chain; its full sequence is DNA repair protein RecO (268 aa).

The protein belongs to the RecO family.

Its function is as follows. Involved in DNA repair and RecF pathway recombination. In Parasynechococcus marenigrum (strain WH8102), this protein is DNA repair protein RecO.